Reading from the N-terminus, the 369-residue chain is Porin-like protein BUsg_347 (369 aa).

A signal peptide spans 1–23 (MKNHKSLAILIPMLFAGSTAVNA).

Belongs to the Gram-negative porin family. Homotrimer.

It is found in the cell outer membrane. Forms pores that allow passive diffusion of small molecules across the membrane. The protein is Porin-like protein BUsg_347 of Buchnera aphidicola subsp. Schizaphis graminum (strain Sg).